The chain runs to 179 residues: Ribosome maturation factor RimM (179 aa).

Residues 95–174 form the PRC barrel domain; it reads KDEFFYFDIL…QIFCTQDAFL (80 aa).

Belongs to the RimM family. Binds ribosomal protein uS19.

Its subcellular location is the cytoplasm. An accessory protein needed during the final step in the assembly of 30S ribosomal subunit, possibly for assembly of the head region. Essential for efficient processing of 16S rRNA. May be needed both before and after RbfA during the maturation of 16S rRNA. It has affinity for free ribosomal 30S subunits but not for 70S ribosomes. This is Ribosome maturation factor RimM from Campylobacter jejuni subsp. jejuni serotype O:2 (strain ATCC 700819 / NCTC 11168).